The sequence spans 369 residues: Cobalt-precorrin-5B C(1)-methyltransferase (369 aa).

This sequence belongs to the CbiD family.

It catalyses the reaction Co-precorrin-5B + S-adenosyl-L-methionine = Co-precorrin-6A + S-adenosyl-L-homocysteine. It participates in cofactor biosynthesis; adenosylcobalamin biosynthesis; cob(II)yrinate a,c-diamide from sirohydrochlorin (anaerobic route): step 6/10. Its function is as follows. Catalyzes the methylation of C-1 in cobalt-precorrin-5B to form cobalt-precorrin-6A. This Methanococcus vannielii (strain ATCC 35089 / DSM 1224 / JCM 13029 / OCM 148 / SB) protein is Cobalt-precorrin-5B C(1)-methyltransferase.